We begin with the raw amino-acid sequence, 387 residues long: Succinyl-diaminopimelate desuccinylase (387 aa).

Histidine 75 serves as a coordination point for Zn(2+). Residue aspartate 77 is part of the active site. Aspartate 108 contributes to the Zn(2+) binding site. Glutamate 139 functions as the Proton acceptor in the catalytic mechanism. Positions 140, 168, and 357 each coordinate Zn(2+).

It belongs to the peptidase M20A family. DapE subfamily. In terms of assembly, homodimer. It depends on Zn(2+) as a cofactor. The cofactor is Co(2+).

The catalysed reaction is N-succinyl-(2S,6S)-2,6-diaminopimelate + H2O = (2S,6S)-2,6-diaminopimelate + succinate. Its pathway is amino-acid biosynthesis; L-lysine biosynthesis via DAP pathway; LL-2,6-diaminopimelate from (S)-tetrahydrodipicolinate (succinylase route): step 3/3. In terms of biological role, catalyzes the hydrolysis of N-succinyl-L,L-diaminopimelic acid (SDAP), forming succinate and LL-2,6-diaminopimelate (DAP), an intermediate involved in the bacterial biosynthesis of lysine and meso-diaminopimelic acid, an essential component of bacterial cell walls. The protein is Succinyl-diaminopimelate desuccinylase of Caulobacter sp. (strain K31).